Reading from the N-terminus, the 416-residue chain is Glutamyl-tRNA reductase (416 aa).

Substrate contacts are provided by residues 49–52, Ser105, 110–112, and Gln116; these read TCNR and EPQ. The active-site Nucleophile is Cys50. 185 to 190 serves as a coordination point for NADP(+); the sequence is GAGETI.

This sequence belongs to the glutamyl-tRNA reductase family. In terms of assembly, homodimer.

The enzyme catalyses (S)-4-amino-5-oxopentanoate + tRNA(Glu) + NADP(+) = L-glutamyl-tRNA(Glu) + NADPH + H(+). It participates in porphyrin-containing compound metabolism; protoporphyrin-IX biosynthesis; 5-aminolevulinate from L-glutamyl-tRNA(Glu): step 1/2. Its function is as follows. Catalyzes the NADPH-dependent reduction of glutamyl-tRNA(Glu) to glutamate 1-semialdehyde (GSA). The sequence is that of Glutamyl-tRNA reductase from Shewanella amazonensis (strain ATCC BAA-1098 / SB2B).